The primary structure comprises 88 residues: Small ribosomal subunit protein bS20 (88 aa).

The disordered stretch occupies residues 1–25 (MANTPSAKKAARKIERRTAVNRARR).

The protein belongs to the bacterial ribosomal protein bS20 family.

Its function is as follows. Binds directly to 16S ribosomal RNA. The chain is Small ribosomal subunit protein bS20 from Azorhizobium caulinodans (strain ATCC 43989 / DSM 5975 / JCM 20966 / LMG 6465 / NBRC 14845 / NCIMB 13405 / ORS 571).